We begin with the raw amino-acid sequence, 836 residues long: Pentatricopeptide repeat-containing protein At2g39620 (836 aa).

PPR repeat units lie at residues 1-35, 36-62, 63-98, 99-133, 134-164, 165-199, 200-230, 233-263, 264-298, 299-333, 334-364, 365-399, 400-434, 435-465, 466-500, 501-535, 536-566, 568-602, 603-637, 638-668, 669-703, 704-734, and 740-770; these read MPIN…GLKP, HNQL…VRDP, GVVL…GIDP, DKYS…GLES, DVYI…MHVK, DVVT…CVDI, DHVS…VIKK, IFAF…VWRK, DESS…DVRM, NKVA…GLIG, DVSV…IEDR, DVVS…HIKP, NAVT…DIES, ELET…LPIK, DAVA…GVCP, DSRT…GFDS, ECHV…CGFE, STVS…KFQP, NAVT…GFCS, QTPV…ISNK, YIVS…ELKP, DSVS…MGER, and EVEH…MRVK. Residues 775 to 836 are type E motif; degenerate; that stretch reads VWGALLNSSR…KVPACSWIEV (62 aa).

This sequence belongs to the PPR family. PCMP-E subfamily.

The polypeptide is Pentatricopeptide repeat-containing protein At2g39620 (PCMP-E33) (Arabidopsis thaliana (Mouse-ear cress)).